Consider the following 246-residue polypeptide: UDP-N-acetyl-D-mannosaminuronic acid transferase (246 aa).

Belongs to the glycosyltransferase 26 family.

The catalysed reaction is UDP-N-acetyl-alpha-D-mannosaminouronate + N-acetyl-alpha-D-glucosaminyl-di-trans,octa-cis-undecaprenyl diphosphate = beta-D-ManNAcA-(1-&gt;4)-alpha-D-GlcNAc-di-trans,octa-cis-undecaprenyl diphosphate + UDP + H(+). It participates in bacterial outer membrane biogenesis; enterobacterial common antigen biosynthesis. In terms of biological role, catalyzes the synthesis of Und-PP-GlcNAc-ManNAcA (Lipid II), the second lipid-linked intermediate involved in enterobacterial common antigen (ECA) synthesis. The sequence is that of UDP-N-acetyl-D-mannosaminuronic acid transferase from Salmonella arizonae (strain ATCC BAA-731 / CDC346-86 / RSK2980).